A 232-amino-acid polypeptide reads, in one-letter code: PsbP domain-containing protein 2, chloroplastic (232 aa).

A chloroplast-targeting transit peptide spans 1-34; sequence MWSQSFLGSAPKLCLFSSSLPPFSHHKIHKFFCF. The N-terminal 37 residues, 35–71, are a transit peptide targeting the thylakoid; it reads AQNPSSTVSINLSKRHLNLSILTLFFNGFLLDNKAKS.

It belongs to the PsbP family.

It localises to the plastid. The protein resides in the chloroplast thylakoid lumen. In Arabidopsis thaliana (Mouse-ear cress), this protein is PsbP domain-containing protein 2, chloroplastic (PPD2).